The sequence spans 682 residues: Heat shock 70 kDa protein, mitochondrial (682 aa).

A mitochondrion-targeting transit peptide spans 1–57; that stretch reads MATAALLRSLRRREFATSSISAYRTLASNTKPSWCPSLVGAKWAGLARPFSSKPAGN. Residues 649 to 682 are disordered; the sequence is GEHMAGGSSGGASGGGGAQGGDQPPEAEYEEVKK. Gly residues predominate over residues 655–668; it reads GSSGGASGGGGAQG. Positions 673 to 682 are enriched in acidic residues; it reads PEAEYEEVKK.

The protein belongs to the heat shock protein 70 family.

The protein resides in the mitochondrion. The chain is Heat shock 70 kDa protein, mitochondrial (HSP68) from Solanum tuberosum (Potato).